The chain runs to 105 residues: Thioredoxin (105 aa).

A Thioredoxin domain is found at 2–105 (VKLIESKEAF…KLEATITEFA (104 aa)). Lys-3 is subject to N6-acetyllysine. N6-succinyllysine is present on Lys-8. Active-site nucleophile residues include Cys-32 and Cys-35. Cys-32 and Cys-35 form a disulfide bridge. Position 39 is an N6-acetyllysine (Lys-39). 2 positions are modified to S-nitrosocysteine: Cys-62 and Cys-69. Position 73 is an S-nitrosocysteine; alternate (Cys-73). Lys-94 carries the N6-acetyllysine; alternate modification. Lys-94 bears the N6-succinyllysine; alternate mark.

Belongs to the thioredoxin family. In terms of assembly, homodimer; disulfide-linked. Interacts with TXNIP through the redox-active site. Interacts with MAP3K5 and CASP3. Interacts with APEX1; the interaction stimulates the FOS/JUN AP-1 DNA-binding activity in a redox-dependent manner. Post-translationally, in the fully reduced protein, both Cys-69 and Cys-73 are nitrosylated in response to nitric oxide (NO). When two disulfide bonds are present in the protein, only Cys-73 is nitrosylated. Cys-73 can serve as donor for nitrosylation of target proteins.

It is found in the nucleus. Its subcellular location is the cytoplasm. The protein localises to the secreted. Functionally, participates in various redox reactions through the reversible oxidation of its active center dithiol to a disulfide and catalyzes dithiol-disulfide exchange reactions. Plays a role in the reversible S-nitrosylation of cysteine residues in target proteins, and thereby contributes to the response to intracellular nitric oxide. Nitrosylates the active site Cys of CASP3 in response to nitric oxide (NO), and thereby inhibits caspase-3 activity. Induces the FOS/JUN AP-1 DNA binding activity in ionizing radiation (IR) cells through its oxidation/reduction status and stimulates AP-1 transcriptional activity. The chain is Thioredoxin (Txn) from Rattus norvegicus (Rat).